Consider the following 512-residue polypeptide: MTNVVQETIGGLNSPRTCPPCILVIFGATGDLTARKLLPALYHLTKEGRLSDQFVCVGFARREKSNELFRQEMKQAVIQFSPSELDIKVWEDFQQRLFYHRSEFDNNMGYTSLKDSLEDLDKTYGTRGNRLFYLSTPPQYFSRIIENLNKHKLFYKNQDQGKPWSRVIIEKPFGRDLDSAKQLQQCINENLNENSVYHIDHYLGKETVQNILTTRFANTIFESCWNSQYIDHVQISLSETIGIGSRGNFFEKSGMLRDMVQNHMMQLLCLLTMEPPTTFDADEIRKEKIKILQRISPFSEGSSIVRGQYGPGTVQGVSVLGYREEENVDKDSRVETYVALKTVINNPRWLGVPFYLRAGKRLAKKSTDISIIFKKSPYNLFAAEECSRCPIENDLLIIRIQPDEGVALKFNCKVPGTNNIVRPVKMDFRYDSYFQTTTPEAYERLLCDCIIGDRTLFTGGDEVMASWKLFTPVLEEWDQDSSPSFPNYPAGSSGPKEADALIERDGRSWRPL.

Residues R61, 103–104 (EF), and K171 each bind NADP(+). Substrate is bound by residues H201, K205, E239, and D258. H263 (proton acceptor) is an active-site residue. K360 and K365 together coordinate substrate. Residues 479–512 (QDSSPSFPNYPAGSSGPKEADALIERDGRSWRPL) are disordered. The segment covering 496–512 (KEADALIERDGRSWRPL) has biased composition (basic and acidic residues).

Belongs to the glucose-6-phosphate dehydrogenase family.

It catalyses the reaction D-glucose 6-phosphate + NADP(+) = 6-phospho-D-glucono-1,5-lactone + NADPH + H(+). It functions in the pathway carbohydrate degradation; pentose phosphate pathway; D-ribulose 5-phosphate from D-glucose 6-phosphate (oxidative stage): step 1/3. Catalyzes the oxidation of glucose 6-phosphate to 6-phosphogluconolactone. This Chlamydia pneumoniae (Chlamydophila pneumoniae) protein is Glucose-6-phosphate 1-dehydrogenase.